A 389-amino-acid chain; its full sequence is Chaperone protein DnaJ (389 aa).

In terms of domain architecture, J spans 5–79; the sequence is KRDYYEVLGI…RKLYDQFGHE (75 aa). A CR-type zinc finger spans residues 151–234; the sequence is GCNKTIKYER…CRSNKYTVTN (84 aa). Zn(2+) contacts are provided by Cys164, Cys167, Cys182, Cys185, Cys208, Cys211, Cys222, and Cys225. CXXCXGXG motif repeat units lie at residues 164–171, 182–189, 208–215, and 222–229; these read CHSCNGFG, CKDCNGNG, CSTCNGQG, and CKTCRSNK.

Belongs to the DnaJ family. Homodimer. The cofactor is Zn(2+).

It is found in the cytoplasm. Functionally, participates actively in the response to hyperosmotic and heat shock by preventing the aggregation of stress-denatured proteins and by disaggregating proteins, also in an autonomous, DnaK-independent fashion. Unfolded proteins bind initially to DnaJ; upon interaction with the DnaJ-bound protein, DnaK hydrolyzes its bound ATP, resulting in the formation of a stable complex. GrpE releases ADP from DnaK; ATP binding to DnaK triggers the release of the substrate protein, thus completing the reaction cycle. Several rounds of ATP-dependent interactions between DnaJ, DnaK and GrpE are required for fully efficient folding. Also involved, together with DnaK and GrpE, in the DNA replication of plasmids through activation of initiation proteins. The sequence is that of Chaperone protein DnaJ from Mycoplasma genitalium (strain ATCC 33530 / DSM 19775 / NCTC 10195 / G37) (Mycoplasmoides genitalium).